Consider the following 311-residue polypeptide: Probable cysteine synthase (311 aa).

The residue at position 45 (lysine 45) is an N6-(pyridoxal phosphate)lysine. Pyridoxal 5'-phosphate is bound by residues asparagine 75, 182 to 186 (GTGGT), and serine 270.

It belongs to the cysteine synthase/cystathionine beta-synthase family. The cofactor is pyridoxal 5'-phosphate.

It catalyses the reaction O-acetyl-L-serine + hydrogen sulfide = L-cysteine + acetate. It functions in the pathway amino-acid biosynthesis; L-cysteine biosynthesis; L-cysteine from L-serine: step 2/2. This is Probable cysteine synthase (ytkP) from Bacillus subtilis (strain 168).